The primary structure comprises 201 residues: Holliday junction resolvase RecU (201 aa).

Residues 1–26 (MAIGYPNGKKYAASQEELPQQKRKAP) are disordered. 4 residues coordinate Mg(2+): T87, D89, E102, and Q121.

Belongs to the RecU family. Mg(2+) is required as a cofactor.

Its subcellular location is the cytoplasm. The enzyme catalyses Endonucleolytic cleavage at a junction such as a reciprocal single-stranded crossover between two homologous DNA duplexes (Holliday junction).. Functionally, endonuclease that resolves Holliday junction intermediates in genetic recombination. Cleaves mobile four-strand junctions by introducing symmetrical nicks in paired strands. Promotes annealing of linear ssDNA with homologous dsDNA. Required for DNA repair, homologous recombination and chromosome segregation. The polypeptide is Holliday junction resolvase RecU (Listeria monocytogenes serotype 4a (strain HCC23)).